The sequence spans 395 residues: Beta-1,4-galactosyltransferase 3 (395 aa).

Residues 1–10 are Cytoplasmic-facing; sequence MLRRLLERPC. Residues 11-31 form a helical; Signal-anchor for type II membrane protein membrane-spanning segment; sequence TLALLVGSQLAVMMYLSLGGF. The Lumenal portion of the chain corresponds to 32-395; it reads RSLSALFGRD…ANHTAPHGSH (364 aa). Residue Asn-57 is glycosylated (N-linked (GlcNAc...) asparagine). Cys-79 and Cys-121 are joined by a disulfide. UDP-alpha-D-galactose-binding positions include 132-136, 171-173, 198-199, Tyr-228, and Trp-260; these read PHRAR, FNR, and VD. Cys-192 and Cys-211 form a disulfide bridge. Asp-199 lines the Mn(2+) pocket. Residue 262–265 coordinates N-acetyl-D-glucosamine; it reads GEDD. Residue His-293 coordinates Mn(2+). Residue 293–295 coordinates UDP-alpha-D-galactose; the sequence is HRG. Arg-305 contributes to the N-acetyl-D-glucosamine binding site. 2 N-linked (GlcNAc...) asparagine glycosylation sites follow: Asn-339 and Asn-387. Residues 341–395 form a disordered region; sequence TADIGTDPRGPRAPSGPRYPPGSSQAFRQEMLQRRPPARPGPLPTANHTAPHGSH.

The protein belongs to the glycosyltransferase 7 family. Mn(2+) is required as a cofactor.

It is found in the golgi apparatus. The protein resides in the golgi stack membrane. It catalyses the reaction an N-acetyl-beta-D-glucosaminyl derivative + UDP-alpha-D-galactose = a beta-D-galactosyl-(1-&gt;4)-N-acetyl-beta-D-glucosaminyl derivative + UDP + H(+). The enzyme catalyses N-acetyl-D-glucosamine + UDP-alpha-D-galactose = beta-D-galactosyl-(1-&gt;4)-N-acetyl-D-glucosamine + UDP + H(+). The catalysed reaction is a beta-D-GlcNAc-(1-&gt;3)-beta-D-Gal-(1-&gt;4)-beta-D-Glc-(1&lt;-&gt;1)-Cer(d18:1(4E)) + UDP-alpha-D-galactose = a neolactoside nLc4Cer(d18:1(4E)) + UDP + H(+). It carries out the reaction a beta-D-glucosylceramide + UDP-alpha-D-galactose = a beta-D-galactosyl-(1-&gt;4)-beta-D-glucosyl-(1&lt;-&gt;1)-ceramide + UDP + H(+). It catalyses the reaction a neolactoside IV(3)-beta-GlcNAc-nLc4Cer + UDP-alpha-D-galactose = a neolactoside nLc6Cer + UDP + H(+). Its pathway is protein modification; protein glycosylation. Responsible for the synthesis of complex-type N-linked oligosaccharides in many glycoproteins as well as the carbohydrate moieties of glycolipids. In Cricetulus griseus (Chinese hamster), this protein is Beta-1,4-galactosyltransferase 3 (B4GALT3).